Reading from the N-terminus, the 375-residue chain is MSYLFNNYKRDNIEFVDANQNELIDKDNNVYLDFSSGIGVTNLGFNMEIYQAVYNQLNLIWHSPNLYLSSIQEEVAQKLIGQRDYLAFFCNSGTEANEAAIKLARKATGKSEIIAFKKSFHGRTYGAMSATGQKKITDQFGPVVPGFKFAIFNDFNSFKSLTSNNTAAVIIEIIQGESGVLPADPLFMKQLNEYCKQKDILIIVDEVQTGIGRTGKLYAHEHYQLSPDIITLAKGLGNGLPIGAMLGKKNLGHAFGYGSHGTTFGGNRLSLAAANQTLSIINDADLLNDVQSKGQFLIENLRKSLVNKRNVIEVRGVGLMVGIEVTNDPSQVVREAKRMGLIILTAGKNVIRLLPPLTITKKQLEKGIEILTEII.

Pyridoxal 5'-phosphate-binding positions include 93–94 and Phe120; that span reads GT. Residue Arg123 coordinates N(2)-acetyl-L-ornithine. 205-208 contacts pyridoxal 5'-phosphate; sequence DEVQ. N6-(pyridoxal phosphate)lysine is present on Lys234. Thr262 contributes to the N(2)-acetyl-L-ornithine binding site. Thr263 contacts pyridoxal 5'-phosphate.

This sequence belongs to the class-III pyridoxal-phosphate-dependent aminotransferase family. ArgD subfamily. In terms of assembly, homodimer. Pyridoxal 5'-phosphate serves as cofactor.

The protein resides in the cytoplasm. It catalyses the reaction N(2)-acetyl-L-ornithine + 2-oxoglutarate = N-acetyl-L-glutamate 5-semialdehyde + L-glutamate. The protein operates within amino-acid biosynthesis; L-arginine biosynthesis; N(2)-acetyl-L-ornithine from L-glutamate: step 4/4. This is Acetylornithine aminotransferase from Staphylococcus epidermidis (strain ATCC 12228 / FDA PCI 1200).